The chain runs to 252 residues: 2-succinyl-6-hydroxy-2,4-cyclohexadiene-1-carboxylate synthase (252 aa).

Belongs to the AB hydrolase superfamily. MenH family. As to quaternary structure, monomer.

It catalyses the reaction 5-enolpyruvoyl-6-hydroxy-2-succinyl-cyclohex-3-ene-1-carboxylate = (1R,6R)-6-hydroxy-2-succinyl-cyclohexa-2,4-diene-1-carboxylate + pyruvate. Its pathway is quinol/quinone metabolism; 1,4-dihydroxy-2-naphthoate biosynthesis; 1,4-dihydroxy-2-naphthoate from chorismate: step 3/7. It participates in quinol/quinone metabolism; menaquinone biosynthesis. In terms of biological role, catalyzes a proton abstraction reaction that results in 2,5-elimination of pyruvate from 2-succinyl-5-enolpyruvyl-6-hydroxy-3-cyclohexene-1-carboxylate (SEPHCHC) and the formation of 2-succinyl-6-hydroxy-2,4-cyclohexadiene-1-carboxylate (SHCHC). The chain is 2-succinyl-6-hydroxy-2,4-cyclohexadiene-1-carboxylate synthase from Salmonella typhi.